A 245-amino-acid polypeptide reads, in one-letter code: Tyrosine recombinase XerD-like (245 aa).

The Core-binding (CB) domain occupies 1–72 (MITFISKFLA…AVNQFLFFLY (72 aa)). The Tyr recombinase domain occupies 90–245 (PLLTPAYQEV…PVTLEKYFKN (156 aa)). Catalysis depends on residues Lys-151 and Arg-210. The O-(3'-phospho-DNA)-tyrosine intermediate role is filled by Tyr-242.

It belongs to the 'phage' integrase family. XerD-like subfamily.

The protein resides in the cytoplasm. In terms of biological role, putative tyrosine recombinase. Not involved in the cutting and rejoining of the recombining DNA molecules on dif(SL) site. This is Tyrosine recombinase XerD-like from Streptococcus mutans serotype c (strain ATCC 700610 / UA159).